Consider the following 353-residue polypeptide: Ig alpha-1 chain C region (353 aa).

Positions 6 to 98 (PKVFPLSLCS…HYTNPSQDVT (93 aa)) constitute an Ig-like 1 domain. 2 disulfide bridges follow: Cys-26–Cys-85 and Cys-77–Cys-101. A disordered region spans residues 96–121 (DVTVPCRVPSTPPTPSPSTPPTPSPP). The span at 105 to 121 (STPPTPSPSTPPTPSPP) shows a compositional bias: pro residues. 3 disulfides stabilise this stretch: Cys-123–Cys-180, Cys-147–Cys-204, and Cys-250–Cys-313. Ig-like domains are found at residues 125–220 (PRLS…ATLS) and 228–330 (PEVH…KTID). The N-linked (GlcNAc...) asparagine glycan is linked to Asn-144. N-linked (GlcNAc...) asparagine glycosylation is present at Asn-340. Cys-352 contacts 3-hydroxy-L-kynurenine.

In terms of assembly, monomeric or polymeric. Post-translationally, 3-Hydroxykynurenine, an oxidized tryptophan metabolite that is common in biological fluids, reacts with alpha-1-microglobulin to form heterogeneous polycyclic chromophores including hydroxanthommatin. The chromophore reacts with accessible cysteines forming non-reducible thioether cross-links with Ig alpha-1 chain C region Cys-352.

Ig alpha is the major immunoglobulin class in body secretions. It may serve both to defend against local infection and to prevent access of foreign antigens to the general immunologic system. In Gorilla gorilla gorilla (Western lowland gorilla), this protein is Ig alpha-1 chain C region (IGHA1).